The following is a 240-amino-acid chain: Orotidine 5'-phosphate decarboxylase (240 aa).

Substrate contacts are provided by residues Asp15, Lys37, 64-73 (DLKYHDIPNT), Thr127, Arg188, Gln197, Gly217, and Arg218. Catalysis depends on Lys66, which acts as the Proton donor.

The protein belongs to the OMP decarboxylase family. Type 1 subfamily. Homodimer.

It carries out the reaction orotidine 5'-phosphate + H(+) = UMP + CO2. Its pathway is pyrimidine metabolism; UMP biosynthesis via de novo pathway; UMP from orotate: step 2/2. Catalyzes the decarboxylation of orotidine 5'-monophosphate (OMP) to uridine 5'-monophosphate (UMP). The chain is Orotidine 5'-phosphate decarboxylase from Citrifermentans bemidjiense (strain ATCC BAA-1014 / DSM 16622 / JCM 12645 / Bem) (Geobacter bemidjiensis).